The sequence spans 514 residues: L-threonine dehydratase biosynthetic IlvA (514 aa).

N6-(pyridoxal phosphate)lysine is present on Lys62. Pyridoxal 5'-phosphate contacts are provided by residues Asn89, 188-192 (GGGGL), and Ser315. ACT-like domains follow at residues 339 to 411 (ALLA…DLSD) and 434 to 504 (RLYS…DETN).

Belongs to the serine/threonine dehydratase family. In terms of assembly, homotetramer. Pyridoxal 5'-phosphate is required as a cofactor.

The catalysed reaction is L-threonine = 2-oxobutanoate + NH4(+). It participates in amino-acid biosynthesis; L-isoleucine biosynthesis; 2-oxobutanoate from L-threonine: step 1/1. Its activity is regulated as follows. Isoleucine allosterically inhibits whereas valine allosterically activates this enzyme. Functionally, catalyzes the anaerobic formation of alpha-ketobutyrate and ammonia from threonine in a two-step reaction. The first step involved a dehydration of threonine and a production of enamine intermediates (aminocrotonate), which tautomerizes to its imine form (iminobutyrate). Both intermediates are unstable and short-lived. The second step is the nonenzymatic hydrolysis of the enamine/imine intermediates to form 2-ketobutyrate and free ammonia. In the low water environment of the cell, the second step is accelerated by RidA. This chain is L-threonine dehydratase biosynthetic IlvA (ilvA), found in Escherichia coli (strain K12).